The following is a 348-amino-acid chain: Heat-inducible transcription repressor HrcA (348 aa).

The protein belongs to the HrcA family.

Functionally, negative regulator of class I heat shock genes (grpE-dnaK-dnaJ and groELS operons). Prevents heat-shock induction of these operons. The polypeptide is Heat-inducible transcription repressor HrcA (Lacticaseibacillus casei (strain BL23) (Lactobacillus casei)).